The following is an 812-amino-acid chain: MRIVNYCLNVLSAGVSRLLVRSKVLPEKPTEQYELNSKNPTFYIVRLNSRFDLAALARVCKRHGLPDPREQQVLGTQRLDRFIGIENPPPLIGDIAKPTNALAQGKQIIDHLLSSGQKDVQVIPVTILWGRAPGKEKPGLSTLITHSLTPSWFRKLFVVLFSGRDNFIRFSQPLDLSLLVDEKADVNELPQKLLRVARVHFRRQKLAATGPKMPSREQLFNSLLASPTIKKAIQDEAKAKNISQAQARQNAVKLLNEIAANYSEAMIRVAERFLTWLWNKLYNGIDIKYTEQIHELTNKGHEIIYMPCHRSHMDYLLLTYAIYHQGLVPPHIAAGINLNFFPAGGIFRRSGAFFIRRSFAGNKLYSAVFKEYLSQLFIKGYSVKFYTEGGRSRTGRLLPPKTGMLAMTMQAMLRGIDRPISIVPVYIGYEHVMEINTYLKELAGNDKKGESIFGIFKAIKNLKNYGRGYLNFGDPISINQYLNDNQPNWRDDIHPTDVQKPQWLGPQVANLADQVMVKINNAAALNAVNLLAMILLVNDKHALSKPKLLAQLDFYLRLQRDASYSNKVTAPEETPEQLLTHALKLNKFDVISDEFGEIIAINDKEKTLFNYYRNNILHLFAVPSLIALHLFREKTTTVSKCQQLVAAFYPLFAKEWYLRELDEDYITRILANFVDQNLIELDGDNIHITNTNDCLAKLDMLGKALNFTLQRYAIVIGFIQTSNGIEKAELERESQVLAQRLGTLHGIKTPEFFDKKVLVSFIDNLRAQSLITDGDAGLIGSVQLCETYMHLKALLPARVWQSISDIVQGQCK.

Positions C308–M313 match the HXXXXD motif motif.

It belongs to the GPAT/DAPAT family.

The protein resides in the cell inner membrane. It carries out the reaction sn-glycerol 3-phosphate + an acyl-CoA = a 1-acyl-sn-glycero-3-phosphate + CoA. Its pathway is phospholipid metabolism; CDP-diacylglycerol biosynthesis; CDP-diacylglycerol from sn-glycerol 3-phosphate: step 1/3. The sequence is that of Glycerol-3-phosphate acyltransferase from Pseudoalteromonas translucida (strain TAC 125).